The chain runs to 86 residues: Anti-adapter protein IraP (86 aa).

A coiled-coil region spans residues 1-36 (MKNLIAELLFKLAQKEEESKELCAQVEALEIIVTAM).

This sequence belongs to the IraP family. In terms of assembly, interacts with RssB.

It is found in the cytoplasm. Inhibits RpoS proteolysis by regulating RssB activity, thereby increasing the stability of the sigma stress factor RpoS especially during phosphate starvation, but also in stationary phase and during nitrogen starvation. Its effect on RpoS stability is due to its interaction with RssB, which probably blocks the interaction of RssB with RpoS, and the consequent delivery of the RssB-RpoS complex to the ClpXP protein degradation pathway. The chain is Anti-adapter protein IraP from Escherichia coli O127:H6 (strain E2348/69 / EPEC).